The sequence spans 70 residues: MKQGIHPNYVEVTATCSCGNVIKTRSTVGKDLNLDVCGNCHPFYTGKQRVVDTGGRVERFNKRFSIPSTK.

Zn(2+) is bound by residues cysteine 16, cysteine 18, cysteine 37, and cysteine 40.

It belongs to the bacterial ribosomal protein bL31 family. Type A subfamily. In terms of assembly, part of the 50S ribosomal subunit. Requires Zn(2+) as cofactor.

Its function is as follows. Binds the 23S rRNA. This Pasteurella multocida (strain Pm70) protein is Large ribosomal subunit protein bL31.